Consider the following 261-residue polypeptide: 5-hmdU DNA kinase (261 aa).

This sequence belongs to the thymidylate kinase family. 5-hmdU DNA kinase subfamily.

It carries out the reaction 5-hydroxymethyl-dUMP in DNA + ATP = 5-phosphomethyl-dUMP in DNA + ADP + H(+). Phosphorylates 5-hydroxymethyluracil (5hmdU) into 5-phosphomethyl-2'-deoxyuridine (5- PmdU) on DNA as a step in the pathway leading to thymidine hypermodifications in the viral genome. As a final result of the pathway of hypermodification, 5-Nalpha-putrescinylthymidine (Nalpha-PutT) substitutes for about 50% of thymidines in the viral DNA. These modifications probably prevent degradation of viral genome by the host restriction-modification antiviral defense system. This chain is 5-hmdU DNA kinase, found in Delftia phage PhiW-14 (Deftia acidovorans bacteriophage phiW-14).